Reading from the N-terminus, the 390-residue chain is Bifunctional enzyme IspD/IspF (390 aa).

The tract at residues 1–229 is 2-C-methyl-D-erythritol 4-phosphate cytidylyltransferase; sequence MAAGRGERAG…RQDHAVFPDI (229 aa). The 2-C-methyl-D-erythritol 2,4-cyclodiphosphate synthase stretch occupies residues 230 to 390; the sequence is RTGNGYDVHS…TVIYPGEVPE (161 aa). 2 residues coordinate a divalent metal cation: D236 and H238. 4-CDP-2-C-methyl-D-erythritol 2-phosphate is bound by residues 236–238 and 262–263; these read DVH and HS. Residue H270 participates in a divalent metal cation binding. 4-CDP-2-C-methyl-D-erythritol 2-phosphate is bound by residues 284–286, 360–363, F367, and R370; these read DIG and TTNE.

In the N-terminal section; belongs to the IspD/TarI cytidylyltransferase family. IspD subfamily. It in the C-terminal section; belongs to the IspF family. Requires a divalent metal cation as cofactor.

The catalysed reaction is 2-C-methyl-D-erythritol 4-phosphate + CTP + H(+) = 4-CDP-2-C-methyl-D-erythritol + diphosphate. It carries out the reaction 4-CDP-2-C-methyl-D-erythritol 2-phosphate = 2-C-methyl-D-erythritol 2,4-cyclic diphosphate + CMP. Its pathway is isoprenoid biosynthesis; isopentenyl diphosphate biosynthesis via DXP pathway; isopentenyl diphosphate from 1-deoxy-D-xylulose 5-phosphate: step 2/6. It functions in the pathway isoprenoid biosynthesis; isopentenyl diphosphate biosynthesis via DXP pathway; isopentenyl diphosphate from 1-deoxy-D-xylulose 5-phosphate: step 4/6. Bifunctional enzyme that catalyzes the formation of 4-diphosphocytidyl-2-C-methyl-D-erythritol from CTP and 2-C-methyl-D-erythritol 4-phosphate (MEP) (IspD), and catalyzes the conversion of 4-diphosphocytidyl-2-C-methyl-D-erythritol 2-phosphate (CDP-ME2P) to 2-C-methyl-D-erythritol 2,4-cyclodiphosphate (ME-CPP) with a corresponding release of cytidine 5-monophosphate (CMP) (IspF). The polypeptide is Bifunctional enzyme IspD/IspF (Brucella suis biovar 1 (strain 1330)).